A 377-amino-acid chain; its full sequence is 3-(aryl)acrylate reductase (377 aa).

FAD-binding positions include 121 to 130 (FALTEPGAGS), 154 to 156 (FIT), Arg-266, Gln-277, and 334 to 338 (QIHGG). Glu-361 functions as the Proton acceptor in the catalytic mechanism. FAD is bound at residue 363–365 (TSE).

The protein belongs to the acyl-CoA dehydrogenase family. FAD is required as a cofactor.

It catalyses the reaction 3-phenylpropanoate + oxidized [electron-transfer flavoprotein] + H(+) = (E)-cinnamate + reduced [electron-transfer flavoprotein]. The enzyme catalyses phloretate + oxidized [electron-transfer flavoprotein] + H(+) = (E)-4-coumarate + reduced [electron-transfer flavoprotein]. It carries out the reaction indole-3-propanoate + oxidized [electron-transfer flavoprotein] + H(+) = (E)-3-(indol-3-yl)acrylate + reduced [electron-transfer flavoprotein]. It functions in the pathway amino-acid degradation. In terms of biological role, essential for the reductive metabolism of L-phenylalanine, L-tyrosine and L-tryptophan. Catalyzes the reduction of phenylacrylic acid to phenylpropionic acid, 4-hydroxy-phenylacrylic acid to 4-hydroxy-phenylpropionic acid, and indoleacrylic acid to indolepropionic acid. This Clostridium sporogenes (strain ATCC 15579) protein is 3-(aryl)acrylate reductase.